Consider the following 498-residue polypeptide: L-ornithine N(5)-monooxygenase (498 aa).

FAD contacts are provided by residues 80–88 (ERQKQFAWH) and Gln-99. Position 104 (Lys-104) interacts with substrate. Val-165 serves as a coordination point for FAD. NADP(+)-binding positions include 251–254 (SGQS) and Arg-276. Residues 290 to 293 (NEVF) and Asn-320 each bind substrate. 320-322 (NYS) provides a ligand contact to NADP(+). Position 463 to 465 (463 to 465 (SLL)) interacts with FAD. A substrate-binding site is contributed by Ser-466.

The protein belongs to the lysine N(6)-hydroxylase/L-ornithine N(5)-oxygenase family. Homotetramer. It depends on FAD as a cofactor.

The enzyme catalyses L-ornithine + NADPH + O2 = N(5)-hydroxy-L-ornithine + NADP(+) + H2O. It carries out the reaction L-ornithine + NADH + O2 = N(5)-hydroxy-L-ornithine + NAD(+) + H2O. The protein operates within siderophore biosynthesis. Functionally, catalyzes the conversion of L-ornithine to N(5)-hydroxyornithine, the first step in the biosynthesis of all hydroxamate-containing siderophores, such as the secreted triacetylfusarinine C (TAFC) involved in iron uptake and the intracellular iron storage compound desferriferricrocin (DFFC). This chain is L-ornithine N(5)-monooxygenase, found in Emericella nidulans (strain FGSC A4 / ATCC 38163 / CBS 112.46 / NRRL 194 / M139) (Aspergillus nidulans).